The following is a 207-amino-acid chain: Large ribosomal subunit protein uL4 (207 aa).

A disordered region spans residues 45–80 (RQGTHAVKNRSEVRGGGRKPWRQKGTGRARQGSTRS). Positions 60-71 (GGRKPWRQKGTG) are enriched in basic residues.

The protein belongs to the universal ribosomal protein uL4 family. As to quaternary structure, part of the 50S ribosomal subunit.

One of the primary rRNA binding proteins, this protein initially binds near the 5'-end of the 23S rRNA. It is important during the early stages of 50S assembly. It makes multiple contacts with different domains of the 23S rRNA in the assembled 50S subunit and ribosome. Its function is as follows. Forms part of the polypeptide exit tunnel. The polypeptide is Large ribosomal subunit protein uL4 (Oceanobacillus iheyensis (strain DSM 14371 / CIP 107618 / JCM 11309 / KCTC 3954 / HTE831)).